Here is a 420-residue protein sequence, read N- to C-terminus: MVHQPPAGTRDLLPQDVTQKRWIESRLQQVFQQWGYQRIITPTLERLDTLVAGGAVQRSAVIQVQSDEESGLGLRPELTASIARAAVTRLAGSSLPLRLYYLANVFRPAFQGDRLQQRELFQAGVELLGVGGTLADAEVLHVLADALAELGFGQPPLGSWHLVVGEASLTRSLLQPFPKDLREKVRQAIAQLDRVTLESLPLESQLRDRALLLHDLRGQPDQVFAKLQQLTLTPLEQTLRDRLAQLVELYNASAGPQDSPLLLDLSLLRSFDYYTGIVFEVVYETPTGPWVLAQGGRYDRLLDVYDPQAAGQPGIGFSCNIENLQQVLLAANRLPHRPPAIDQLVIPVDSEAYGAALAEAQRLQRQDQLRVELYLDSDRRPEVVQAFAQRRRIGRIVWVSSGSAPQSEAVAVAERATTTC.

This sequence belongs to the class-II aminoacyl-tRNA synthetase family. HisZ subfamily. In terms of assembly, heteromultimer composed of HisG and HisZ subunits.

It is found in the cytoplasm. It functions in the pathway amino-acid biosynthesis; L-histidine biosynthesis; L-histidine from 5-phospho-alpha-D-ribose 1-diphosphate: step 1/9. Its function is as follows. Required for the first step of histidine biosynthesis. May allow the feedback regulation of ATP phosphoribosyltransferase activity by histidine. The sequence is that of ATP phosphoribosyltransferase regulatory subunit from Synechococcus sp. (strain ATCC 27144 / PCC 6301 / SAUG 1402/1) (Anacystis nidulans).